The primary structure comprises 24 residues: Heat shock 70 kDa protein 4L (24 aa).

Thr-19 carries the phosphothreonine modification.

Belongs to the heat shock protein 70 family. In terms of assembly, homodimer. In the testis, forms a complex with p53 at 32.5 degrees Celsius which is scrotal temperature but not at 37 or 42 degrees Celsius. As to expression, expressed at high levels in testis and at much lower levels in brain. In testis, expressed mainly in germ cells. Widespread in brain with highest expression in cerebellum and medulla oblongata. Also expressed in renal medulla of water-restricted animals.

The protein resides in the cytoplasm. The protein localises to the nucleus. Its function is as follows. Possesses chaperone activity in vitro where it inhibits aggregation of citrate synthase. In Rattus norvegicus (Rat), this protein is Heat shock 70 kDa protein 4L (Hspa4l).